The primary structure comprises 534 residues: MAIKLIALVITICVASWDSAQGRSLRFSTTPLNRYSFPPHFDFGVASSAYQYEGAVEEGGRSPSIWDNFTHAFPERTNMDNGDVAVDFYHRYKDDIKLIKEMNMDSFRFSLSWSRILPSGKLSDGVNKEGVQFYKNLIDELIKNGIKPFVTIYHWDIPQALDDEYGSFLSPRIIDDFRNFARFCFQEFGDKVSMWTTFNEPYVYSVSGYDAGNKAIGRCSKWVNSLCIAGDSGTEPYLVSHNLLLAHAAAVEEFRKCDKISQDAKIGIVLSPYWFEPYDIDSESDKEAVERALVFNIGWHLSPLVFGDYPETIKTTAGNRLPSFTKEQSMMLQNSFDFIGINYYTARFVAHDLHVDLSRPRFTTDQHLQYKLTNRSGDHISSESDGTKILWSYPEGLRKLLNYIKNKYNNPTIYITENGFDDYENGSVTREEIIEDTKRIEYHQNHLQQLQKAITEDGCNVKGYFTWSLLDNFEWEHGYAVRFGLYYVDYKNGLSRHAKNSAKWFKHFLQRSGKPMPLDLFKSVKNWWSAIPMI.

Positions 1–22 (MAIKLIALVITICVASWDSAQG) are cleaved as a signal peptide. Glutamine 51 is a binding site for a beta-D-glucoside. N-linked (GlcNAc...) asparagine glycosylation occurs at asparagine 68. Residues histidine 154 and 199–200 (NE) each bind a beta-D-glucoside. The active-site Proton donor is glutamate 200. Cysteine 219 and cysteine 227 are disulfide-bonded. Tyrosine 344 is an a beta-D-glucoside binding site. N-linked (GlcNAc...) asparagine glycosylation occurs at asparagine 374. Residue glutamate 417 coordinates a beta-D-glucoside. The Nucleophile role is filled by glutamate 417. An N-linked (GlcNAc...) asparagine glycan is attached at asparagine 425. A beta-D-glucoside contacts are provided by residues tryptophan 467, 474–475 (EW), and phenylalanine 483.

The protein belongs to the glycosyl hydrolase 1 family.

The enzyme catalyses Hydrolysis of terminal, non-reducing beta-D-glucosyl residues with release of beta-D-glucose.. The protein is Beta-glucosidase 32 of Arabidopsis thaliana (Mouse-ear cress).